Reading from the N-terminus, the 386-residue chain is Methylthioribose-1-phosphate isomerase (386 aa).

Residue aspartate 258 is the Proton donor of the active site.

This sequence belongs to the eIF-2B alpha/beta/delta subunits family. MtnA subfamily.

Its subcellular location is the cytoplasm. The protein resides in the nucleus. It carries out the reaction 5-(methylsulfanyl)-alpha-D-ribose 1-phosphate = 5-(methylsulfanyl)-D-ribulose 1-phosphate. It functions in the pathway amino-acid biosynthesis; L-methionine biosynthesis via salvage pathway; L-methionine from S-methyl-5-thio-alpha-D-ribose 1-phosphate: step 1/6. Functionally, catalyzes the interconversion of methylthioribose-1-phosphate (MTR-1-P) into methylthioribulose-1-phosphate (MTRu-1-P). The chain is Methylthioribose-1-phosphate isomerase from Postia placenta (strain ATCC 44394 / Madison 698-R) (Brown rot fungus).